The sequence spans 205 residues: uncharacterized protein (205 aa).

A run of 2 helical transmembrane segments spans residues 12–32 and 49–69; these read WQIY…GVGF and WISS…VMSW.

The protein localises to the host membrane. This is an uncharacterized protein from Haemophilus influenzae (Bacteriophage HP1).